We begin with the raw amino-acid sequence, 482 residues long: 3-isopropylmalate dehydratase large subunit (482 aa).

A disordered region spans residues 60–79 (ATPDHNVPTTRAERQGGLES). [4Fe-4S] cluster is bound by residues Cys-353, Cys-414, and Cys-417.

This sequence belongs to the aconitase/IPM isomerase family. LeuC type 1 subfamily. In terms of assembly, heterodimer of LeuC and LeuD. The cofactor is [4Fe-4S] cluster.

It catalyses the reaction (2R,3S)-3-isopropylmalate = (2S)-2-isopropylmalate. Its pathway is amino-acid biosynthesis; L-leucine biosynthesis; L-leucine from 3-methyl-2-oxobutanoate: step 2/4. Functionally, catalyzes the isomerization between 2-isopropylmalate and 3-isopropylmalate, via the formation of 2-isopropylmaleate. This is 3-isopropylmalate dehydratase large subunit from Xanthomonas euvesicatoria pv. vesicatoria (strain 85-10) (Xanthomonas campestris pv. vesicatoria).